The primary structure comprises 120 residues: Ribonuclease P protein component 2 (120 aa).

It belongs to the eukaryotic/archaeal RNase P protein component 2 family. Consists of a catalytic RNA component and at least 4-5 protein subunits.

It is found in the cytoplasm. It catalyses the reaction Endonucleolytic cleavage of RNA, removing 5'-extranucleotides from tRNA precursor.. In terms of biological role, part of ribonuclease P, a protein complex that generates mature tRNA molecules by cleaving their 5'-ends. The sequence is that of Ribonuclease P protein component 2 from Thermococcus kodakarensis (strain ATCC BAA-918 / JCM 12380 / KOD1) (Pyrococcus kodakaraensis (strain KOD1)).